Here is a 754-residue protein sequence, read N- to C-terminus: Phosphatase and actin regulator 4B (754 aa).

Over residues 1-12 (MENRDDEVEHQH) the composition is skewed to basic and acidic residues. Disordered stretches follow at residues 1-38 (MENRDDEVEHQHSTMGSEGGTAGDGTPPPKRKGKFSTL), 83-105 (KELPDNESGEAHGHKAPYVKNGH), 120-625 (VHSP…SKEQ), and 637-666 (LTRRLSQRPTAEELEQRNILQPKNEADRQA). Residues 61–86 (EVLERKMSMRRPRQELIEQGVLKELP) form an RPEL 1 repeat. Basic and acidic residues-rich tracts occupy residues 138–153 (PEDRRARAPSDGDHRG), 184–221 (HGEDIRRGGRAHAEMDKRPGLMKAPSEDGRRTRPEPDW), and 229–241 (SSVEEGRGRRESD). 2 stretches are compositionally biased toward low complexity: residues 296–307 (SFCSSNSSSSSS) and 316–333 (SSAGANTAPPGGAPLTTS). 4 stretches are compositionally biased toward pro residues: residues 348–357 (KQPPMPPPKP), 381–390 (KPSPPMPPKR), 427–445 (LPPPPPSPPLPTHIPPSPP), and 460–478 (YPLPQPLPVHFDPPSPPED). 3 stretches are compositionally biased toward acidic residues: residues 483-503 (DEDDYSDEEEEEEDDEDDEEP), 541-557 (SEEEEDEEDQHPEESDS), and 566-576 (DESDEDEEDDS). The segment covering 605 to 615 (QAPERQAKSEH) has biased composition (basic and acidic residues). RPEL repeat units follow at residues 635-660 (TALTRRLSQRPTAEELEQRNILQPKN) and 673-698 (RRLTRKLSQRPTVAELQARKILRFHE). At S642 the chain carries Phosphoserine.

It belongs to the phosphatase and actin regulator family. In terms of assembly, binds ppp1ca and actin.

It localises to the cytoplasm. The protein localises to the cell projection. Its subcellular location is the lamellipodium. Its function is as follows. Regulator of protein phosphatase 1 (PP1) required for neural tube and optic fissure closure, and enteric neural crest cell (ENCCs) migration during development. Acts as an activator of PP1. During neural tube closure, localizes to the ventral neural tube and activates PP1, leading to down-regulate cell proliferation within cranial neural tissue and the neural retina. Also acts as a regulator of migration of enteric neural crest cells (ENCCs) by activating PP1, leading to repression of the integrin signaling through the rho/rock pathway. This Danio rerio (Zebrafish) protein is Phosphatase and actin regulator 4B (phactr4b).